Reading from the N-terminus, the 246-residue chain is E3 ubiquitin-protein ligase MARCHF2 (246 aa).

Residues 56–116 (GTQSDGPICR…ELCHTEFAVE (61 aa)) form an RING-CH-type zinc finger. Residues Cys64, Cys67, Cys80, Cys82, His90, Cys93, Cys106, and Cys109 each coordinate Zn(2+). 2 helical membrane passes run 138–158 (LFCD…SGWL) and 175–195 (AVGL…WTLV).

It localises to the endoplasmic reticulum membrane. Its subcellular location is the lysosome membrane. It is found in the endosome membrane. The enzyme catalyses S-ubiquitinyl-[E2 ubiquitin-conjugating enzyme]-L-cysteine + [acceptor protein]-L-lysine = [E2 ubiquitin-conjugating enzyme]-L-cysteine + N(6)-ubiquitinyl-[acceptor protein]-L-lysine.. It participates in protein modification; protein ubiquitination. In terms of biological role, E3 ubiquitin-protein ligase which may be involved in endosomal trafficking. E3 ubiquitin ligases accept ubiquitin from an E2 ubiquitin-conjugating enzyme in the form of a thioester and then directly transfer the ubiquitin to targeted substrates. The chain is E3 ubiquitin-protein ligase MARCHF2 (marchf2) from Xenopus tropicalis (Western clawed frog).